Consider the following 180-residue polypeptide: ATP synthase subunit delta (180 aa).

This sequence belongs to the ATPase delta chain family. As to quaternary structure, F-type ATPases have 2 components, F(1) - the catalytic core - and F(0) - the membrane proton channel. F(1) has five subunits: alpha(3), beta(3), gamma(1), delta(1), epsilon(1). F(0) has three main subunits: a(1), b(2) and c(10-14). The alpha and beta chains form an alternating ring which encloses part of the gamma chain. F(1) is attached to F(0) by a central stalk formed by the gamma and epsilon chains, while a peripheral stalk is formed by the delta and b chains.

It localises to the cell membrane. Functionally, f(1)F(0) ATP synthase produces ATP from ADP in the presence of a proton or sodium gradient. F-type ATPases consist of two structural domains, F(1) containing the extramembraneous catalytic core and F(0) containing the membrane proton channel, linked together by a central stalk and a peripheral stalk. During catalysis, ATP synthesis in the catalytic domain of F(1) is coupled via a rotary mechanism of the central stalk subunits to proton translocation. This protein is part of the stalk that links CF(0) to CF(1). It either transmits conformational changes from CF(0) to CF(1) or is implicated in proton conduction. This is ATP synthase subunit delta from Latilactobacillus sakei subsp. sakei (strain 23K) (Lactobacillus sakei subsp. sakei).